The chain runs to 444 residues: C4-dicarboxylate transport protein (444 aa).

9 helical membrane-spanning segments follow: residues His21 to Pro41, Leu57 to Met77, Ile92 to Val112, Gly161 to Gly181, Leu201 to Ile221, Leu234 to Val254, Ile320 to Ser340, Leu345 to Ile365, and Ala368 to Ile388.

Belongs to the dicarboxylate/amino acid:cation symporter (DAACS) (TC 2.A.23) family.

It localises to the cell inner membrane. In terms of biological role, responsible for the transport of dicarboxylates such as succinate, fumarate, and malate from the periplasm across the membrane. This chain is C4-dicarboxylate transport protein, found in Brucella anthropi (strain ATCC 49188 / DSM 6882 / CCUG 24695 / JCM 21032 / LMG 3331 / NBRC 15819 / NCTC 12168 / Alc 37) (Ochrobactrum anthropi).